The primary structure comprises 134 residues: Beta-synuclein (134 aa).

2 tandem repeats follow at residues 20-30 (EKTKQGVTEAA) and 31-41 (EKTKEGVLYVG). The interval 20 to 67 (EKTKQGVTEAAEKTKEGVLYVGSKTKEGVVQGVASVAEKTKEQASHLG) is 4 X 11 AA tandem repeats of [EGS]-K-T-K-[EQ]-[GQ]-V-X(4). The 3; approximate repeat unit spans residues 42–56 (SKTKEGVVQGVASVA). Repeat 4 spans residues 57–67 (EKTKEQASHLG). Residues 97–134 (EVAQEAAEEPLIEPLMEPEGESYEEQPQEEYQEYEPEA) are disordered. The span at 98 to 134 (VAQEAAEEPLIEPLMEPEGESYEEQPQEEYQEYEPEA) shows a compositional bias: acidic residues. Ser118 carries the post-translational modification Phosphoserine; by BARK1, CK2 and GRK5.

The protein belongs to the synuclein family. Post-translationally, phosphorylated. Phosphorylation by G-protein coupled receptor kinases (GRK) is more efficient than phosphorylation by CK1, CK2 and CaM-kinase II. In terms of tissue distribution, specifically present in synapses around neurons but not in glial cells.

The protein localises to the cytoplasm. May be involved in neuronal plasticity. The chain is Beta-synuclein (SNCB) from Bos taurus (Bovine).